The primary structure comprises 157 residues: Small ribosomal subunit protein uS7 (157 aa).

The protein belongs to the universal ribosomal protein uS7 family. As to quaternary structure, part of the 30S ribosomal subunit. Contacts proteins S9 and S11.

Functionally, one of the primary rRNA binding proteins, it binds directly to 16S rRNA where it nucleates assembly of the head domain of the 30S subunit. Is located at the subunit interface close to the decoding center, probably blocks exit of the E-site tRNA. This is Small ribosomal subunit protein uS7 from Borrelia turicatae (strain 91E135).